Reading from the N-terminus, the 489-residue chain is Ribonuclease G (489 aa).

One can recognise an S1 motif domain in the interval 39-128; it reads GNIYKGRVSR…LTTDITLPSR (90 aa). Mg(2+) contacts are provided by Asp304 and Asp347.

Belongs to the RNase E/G family. RNase G subfamily. In terms of assembly, homodimer, and possible higher multimers. The cofactor is Mg(2+).

It is found in the cytoplasm. Acts in the processing of the 5'-end of precursors of 16S rRNA. Confers adaptive resistance to aminoglycoside antibiotics through modulation of 16S rRNA processing. An endoribonuclease, it prefers 5'-monophosphorylated substrates and cleaves single-stranded sites rich in A and U residues; also contributes to 23S rRNA processing, tRNA processing and mRNA turnover. Involved in decay of speF mRNA, has a preference for adenine nucleotides. This Salmonella typhimurium (strain SL1344) protein is Ribonuclease G.